The sequence spans 295 residues: Sulfotransferase 1E1 (295 aa).

48 to 53 (KSGTTW) provides a ligand contact to 3'-phosphoadenylyl sulfate. 106-108 (KTH) contributes to the substrate binding site. H108 (proton acceptor) is an active-site residue. Residues R130 and S138 each contribute to the 3'-phosphoadenylyl sulfate site. Position 156 is a phosphoserine (S156). Residues Y193, 227–232 (TSFQEM), and 257–259 (RKG) each bind 3'-phosphoadenylyl sulfate.

The protein belongs to the sulfotransferase 1 family. As to quaternary structure, homodimer. As to expression, testis and at very low level in the placenta.

The protein resides in the cytoplasm. Its subcellular location is the cytosol. It catalyses the reaction estrone + 3'-phosphoadenylyl sulfate = estrone 3-sulfate + adenosine 3',5'-bisphosphate + H(+). It carries out the reaction 17beta-estradiol + 3'-phosphoadenylyl sulfate = 17beta-estradiol 3-sulfate + adenosine 3',5'-bisphosphate + H(+). The enzyme catalyses (24S)-hydroxycholesterol + 3'-phosphoadenylyl sulfate = (24S)-hydroxycholesterol 3-sulfate + adenosine 3',5'-bisphosphate + H(+). The catalysed reaction is 3beta-hydroxyandrost-5-en-17-one + 3'-phosphoadenylyl sulfate = dehydroepiandrosterone 3-sulfate + adenosine 3',5'-bisphosphate + H(+). It catalyses the reaction 4-ethylphenol + 3'-phosphoadenylyl sulfate = 4-ethylphenyl sulfate + adenosine 3',5'-bisphosphate + H(+). Inhibited by estradiol. In terms of biological role, sulfotransferase that utilizes 3'-phospho-5'-adenylyl sulfate (PAPS) as sulfonate donor to catalyze the sulfate conjugation of estradiol and estrone. Is a key enzyme in estrogen homeostasis, the sulfation of estrogens leads to their inactivation. Also sulfates dehydroepiandrosterone, pregnenolone, (24S)-hydroxycholesterol and xenobiotic compounds like ethinylestradiol, equalenin, diethyl stilbesterol and 1-naphthol at significantly lower efficiency. Does not sulfonate cortisol, testosterone and dopamine. May play a role in gut microbiota-host metabolic interaction. O-sulfonates 4-ethylphenol (4-EP), a dietary tyrosine-derived metabolite produced by gut bacteria. The product 4-EPS crosses the blood-brain barrier and may negatively regulate oligodendrocyte maturation and myelination, affecting the functional connectivity of different brain regions associated with the limbic system. This Mus musculus (Mouse) protein is Sulfotransferase 1E1 (Sult1e1).